A 92-amino-acid polypeptide reads, in one-letter code: Small ribosomal subunit protein uS19c (92 aa).

Belongs to the universal ribosomal protein uS19 family.

The protein resides in the plastid. The protein localises to the chloroplast. In terms of biological role, protein S19 forms a complex with S13 that binds strongly to the 16S ribosomal RNA. This is Small ribosomal subunit protein uS19c from Amborella trichopoda.